The chain runs to 200 residues: Inducible T-cell costimulator (200 aa).

The N-terminal stretch at 1–20 (MKPYFCRVFVFCFLIRLLTG) is a signal peptide. Topologically, residues 21 to 144 (EINGSADHRM…QLCCQLKLWL (124 aa)) are extracellular. N23 is a glycosylation site (N-linked (GlcNAc...) asparagine). The Ig-like V-type domain maps to 30 to 133 (MFSFHNGGVQ…LSGGYLHIYE (104 aa)). 2 disulfide bridges follow: C42/C109 and C63/C83. 2 N-linked (GlcNAc...) asparagine glycosylation sites follow: N89 and N123. Residues 145–165 (PVGCAAFVVVLLFGCILIIWF) traverse the membrane as a helical segment. The Cytoplasmic portion of the chain corresponds to 166-200 (SKKKYGSSVHDPNSEYMFMAAVNTNKKSRLAGVTS).

In terms of assembly, homodimer; disulfide-linked. Interacts with ICOSLG. Interacts with PIK3R1. Interacts with TBK1; this interaction is critical for the maturation of T follicular regulatory cells. Post-translationally, N-glycosylated. In terms of tissue distribution, expressed on activated T-cells and resting memory T-cells. High expression seen in the thymic medulla and in the germinal centers and T-cell zones of lymph nodes and Peyer patches. Expressed at low levels in the spleen.

The protein localises to the cell membrane. Functionally, stimulatory receptor expressed in activated or antigen-experienced T-cells that plays an important role in the immune response. Upon binding to its ligand ICOSL expressed on antigen presenting cells (APCs), delivers costimulatory signals that enhances all basic T-cell responses to a foreign antigen, namely proliferation, secretion of lymphokines including IL10, up-regulation of molecules that mediate cell-cell interaction, and effective help for antibody secretion by B-cells. Also acts as a costimulatory receptor critical for the differentiation of T follicular regulatory cells upon immune challenges such as viral infection. Mechanistically, potentiates TCR-induced calcium flux by augmenting PLCG1 activation and actin remodeling. In addition, activates PI3K signaling pathways independently of calcium flux. Essential both for efficient interaction between T and B-cells and for normal antibody responses to T-cell dependent antigens. Prevents the apoptosis of pre-activated T-cells. Plays a critical role in CD40-mediated class switching of immunoglobin isotypes. The polypeptide is Inducible T-cell costimulator (Icos) (Mus musculus (Mouse)).